Here is a 2539-residue protein sequence, read N- to C-terminus: MNHPFGKEEAASQKQLFGFFCECLRRGEWELAQACVPQLQEGQGDIPKRVEDILQALVVCPNLLRCGQDINPQRVAWVWLLVLEKWLAREKKLLPVVFRRKLEFLLLSEDLQGDIPENILEELYETLTQGAVGHVPDGNPRRESWTPRLSSEAVSVLWDLLRQSPQPAQALLELLLEEDDGTGLCHWPLQNALVDLIRKALRALQGPDSVPPGVVDAIYGALRTLRCPAEPLGVELHLLCEELLEACRTEGSPLREERLLSCLLHKASRGLLSLYGHTYAEKVTEKPPRATASGKVSPDHLDPERAMLALFSNPNPAEAWKVAYFYCLSNNKHFLEQILVTALTLLKEEDFPNLGCLLDREFRPLSCLLVLLGWTHCQSLESAKRLLQTLHRTQGPGCDELLRDACDGLWAHLEVLEWCIQQSSNPIPKRDLLYHLHGGDSHSVLYTLHHLTNLPALREEDVLKLLQKVPAKDPQQEPDAVDAPVPEHLSQCQNLTLYQGFCAMKYAIYALCVNSHQHSQCQDCKDSLSEDLASATEPANDSLSSPGAANLFSTYLARCQQYLCSIPDSLCLELLENIFSLLLITSADLHPEPHLPEDYAEDDDIEGKSPSGLRSPSESPQHIAHPERKSERGSLGVPKTLAYTMPSHVKAEPKDSYPGPHRHSFLDLKHFTSGISGFLADEFAIGAFLRLLQEQLDEISSRSPPEKPKQESQSCSGSRDGLQSRLHRLSKVVSEAQWRHKVVTSNHRSEEQPSRRYQPATRHPSLRRGRRTRRSQADGRDRGSNPSLESTSSELSTSTSEGSLSAMSGRNELHSRLHPHPQSSLIPMMFSPPESLLASCILRGNFAEAHQVLFTFNLKSSPSSGELMFMERYQEVIQELAQVEHKIENQNSDAGSSTIRRTGSGRSTLQAIGSAAAAGMVFYSISDVTDKLLNTSGDPIPMLQEDFWISTALVEPTAPLREVLEDLSPPAMAAFDLACSQCQLWKTCKQLLETAERRLNSSLERRGRRIDHVLLNADGIRGFPVVLQQISKSLNYLLMSASQTKSESVEEKGGGPPRCSITELLQMCWPSLSEDCVASHTTLSQQLDQVLQSLREALELPEPRTPPLSSLVEQAAQKAPEAEAHPVQIQTQLLQKNLGKQTPSGSRQMDYLGTFFSYCSTLAAVLLQSLSSEPDHVEVKVGNPFVLLQQSSSQLVSHLLFERQVPPERLAALLAQENLSLSVPQVIVSCCCEPLALCSSRQSQQTSSLLTRLGTLAQLHASHCLDDLPLSTPSSPRTTENPTLERKPYSSPRDSSLPALTSSALAFLKSRSKLLATVACLGASPRLKVSKPSLSWKELRGRREVPLAAEQVARECERLLEQFPLFEAFLLAAWEPLRGSLQQGQSLAVNLCGWASLSTVLLGLHSPIALDVLSEAFEESLVARDWSRALQLTEVYGRDVDDLSSIKDAVLSCAVACDKEGWQYLFPVKDASLRSRLALQFVDRWPLESCLEILAYCISDTAVQEGLKCELQRKLAELQVYQKILGLQSPPVWCDWQTLRSCCVEDPSTVMNMILEAQEYELCEEWGCLYPIPREHLISLHQKHLLHLLERRDHDKALQLLRRIPDPTMCLEVTEQSLDQHTSLATSHFLANYLTTHFYGQLTAVRHREIQALYVGSKILLTLPEQHRASYSHLSSNPLFMLEQLLMNMKVDWATVAVQTLQQLLVGQEIGFTMDEVDSLLSRYAEKALDFPYPQREKRSDSVIHLQEIVHQAADPETLPRSPSAEFSPAAPPGISSIHSPSLRERSFPPTQPSQEFVPPATPPARHQWVPDETESICMVCCREHFTMFNRRHHCRRCGRLVCSSCSTKKMVVEGCRENPARVCDQCYSYCNKDVPEEPSEKPEALDSSKNESPPYSFVVRVPKADEVEWILDLKEEENELVRSEFYYEQAPSASLCIAILNLHRDSIACGHQLIEHCCRLSKGLTNPEVDAGLLTDIMKQLLFSAKMMFVKAGQSQDLALCDSYISKVDVLNILVAAAYRHVPSLDQILQPAAVTRLRNQLLEAEYYQLGVEVSTKTGLDTTGAWHAWGMACLKAGNLTAAREKFSRCLKPPFDLNQLNHGSRLVQDVVEYLESTVRPFVSLQDDDYFATLRELEATLRTQSLSLAVIPEGKIMNNTYYQECLFYLHNYSTNLAIISFYVRHSCLREALLHLLNKESPPEVFIEGIFQPSYKSGKLHTLENLLESIDPTLESWGKYLIAACQHLQKKNYYHILYELQQFMKDQVRAAMTCIRFFSHKAKSYTELGEKLSWLLKAKDHLKIYLQETSRSSGRKKTTFFRKKMTAADVSRHMNTLQLQMEVTRFLHRCESAGTSQITTLPLPTLFGNNHMKMDVACKVMLGGKNVEDGFGIAFRVLQDFQLDAAMTYCRAARQLVEKEKYSEIQQLLKCVSESGMAAKSDGDTILLNCLEAFKRIPPQELEGLIQAIHNDDNKVRAYLICCKLRSAYLIAVKQEHSRATALVQQVQQAAKSSGDAVVQDICAQWLLTSHPRGAHGPGSRK.

Phosphoserine occurs at positions 297, 615, 619, and 703. Disordered regions lie at residues 594–637 (HLPE…SLGV), 699–724 (ISSR…GLQS), and 738–806 (WRHK…SLSA). The span at 764–774 (PSLRRGRRTRR) shows a compositional bias: basic residues. Positions 787-805 (SLESTSSELSTSTSEGSLS) are enriched in low complexity. Phosphoserine is present on serine 800. Residues 868–895 (MFMERYQEVIQELAQVEHKIENQNSDAG) adopt a coiled-coil conformation. A disordered region spans residues 1267 to 1296 (DLPLSTPSSPRTTENPTLERKPYSSPRDSS). A compositionally biased stretch (polar residues) spans 1271 to 1282 (STPSSPRTTENP). 4 positions are modified to phosphoserine: serine 1742, serine 1764, serine 1780, and serine 1782. A disordered region spans residues 1754–1808 (ADPETLPRSPSAEFSPAAPPGISSIHSPSLRERSFPPTQPSQEFVPPATPPARHQ). Positions 1760 to 1769 (PRSPSAEFSP) are enriched in low complexity. An FYVE-type zinc finger spans residues 1812–1872 (DETESICMVC…VCDQCYSYCN (61 aa)). Cysteine 1818, cysteine 1821, cysteine 1835, cysteine 1838, cysteine 1843, cysteine 1846, cysteine 1864, and cysteine 1867 together coordinate Zn(2+).

Interacts with AP5Z1, AP5B1, AP5S1 and SPG11. Interacts with TTC19 and KIF13A. In terms of tissue distribution, strongest expression in the adrenal gland, bone marrow, adult brain, fetal brain, lung, placenta, prostate, skeletal muscle, testis, thymus, and retina. Intermediate levels are detected in other structures, including the spinal cord.

It is found in the cytoplasm. It localises to the cytoskeleton. Its subcellular location is the microtubule organizing center. The protein resides in the centrosome. The protein localises to the midbody. In terms of biological role, phosphatidylinositol 3-phosphate-binding protein required for the abscission step in cytokinesis: recruited to the midbody during cytokinesis and acts as a regulator of abscission. May also be required for efficient homologous recombination DNA double-strand break repair. The protein is Zinc finger FYVE domain-containing protein 26 (ZFYVE26) of Homo sapiens (Human).